Here is a 145-residue protein sequence, read N- to C-terminus: Leghemoglobin-1 (145 aa).

Positions 3–145 constitute a Globin domain; the sequence is AFSDKQEALV…ELAAAIKKAY (143 aa). A nitrated tyrosine mark is found at Tyr-26 and Tyr-31. Residue Ser-46 coordinates heme b. Phosphoserine is present on Ser-46. Position 62 (His-62) interacts with O2. Lys-65, His-93, and Lys-96 together coordinate heme b. Tyr-134 carries the nitrated tyrosine modification.

Belongs to the plant globin family. As to quaternary structure, monomer. Post-translationally, nitrated in effective nodules and particularly in hypoxic conditions; this mechanism may play a protective role in the symbiosis by buffering toxic peroxynitrite NO(2)(-). Nitration level decrease during nodule senescence. In terms of processing, phosphorylation at Ser-46 disrupts the molecular environment of its porphyrin ring oxygen binding pocket, thus leading to a reduced oxygen consumption and to the delivery of oxygen O(2) to symbiosomes. In terms of tissue distribution, root nodules.

It localises to the cytoplasm. Its subcellular location is the cytosol. The protein localises to the nucleus. Functionally, leghemoglobin that reversibly binds oxygen O(2) through a pentacoordinated heme iron. In root nodules, facilitates the diffusion of oxygen to the bacteroids while preventing the bacterial nitrogenase from being inactivated by buffering dioxygen, nitric oxide and carbon monoxide, and promoting the formation of reactive oxygen species (ROS, e.g. H(2)O(2)). This role is essential for symbiotic nitrogen fixation (SNF). The sequence is that of Leghemoglobin-1 from Vigna unguiculata (Cowpea).